The chain runs to 496 residues: Fascin (496 aa).

Belongs to the fascin family.

The protein resides in the cytoplasm. The protein localises to the cytoskeleton. In terms of biological role, acts as an actin bundling protein. The sequence is that of Fascin from Strongylocentrotus purpuratus (Purple sea urchin).